A 154-amino-acid polypeptide reads, in one-letter code: MATFSQKPAEVVKKWVLIDAEGLVVGRLASLVANRLRGKHKATFTPHVDDGDNVIIINADKVVLTGKKYTDKKYYWHTGHPGGIKERTARQILEGRFPERVLEKAIERMIPRGPLGRRQMKNLRVNVGPNHQHEAQQPEVLDVAALNRKNKGNA.

Belongs to the universal ribosomal protein uL13 family. In terms of assembly, part of the 50S ribosomal subunit.

Its function is as follows. This protein is one of the early assembly proteins of the 50S ribosomal subunit, although it is not seen to bind rRNA by itself. It is important during the early stages of 50S assembly. This Brucella melitensis biotype 2 (strain ATCC 23457) protein is Large ribosomal subunit protein uL13.